The chain runs to 655 residues: p-hydroxybenzoic acid efflux pump subunit AaeB (655 aa).

Topologically, residues 1–12 are periplasmic; the sequence is MDIFSIANQHIR. The chain crosses the membrane as a helical span at residues 13 to 33; it reads FAVKLATAIVLALFVGFHFQL. Over 34 to 37 the chain is Cytoplasmic; it reads ETPR. A helical transmembrane segment spans residues 38 to 58; that stretch reads WAVLTAAIVAAGPAFAAGGEP. Over 59 to 68 the chain is Periplasmic; the sequence is YSGAIRYRGF. A helical transmembrane segment spans residues 69–89; it reads LRIIGTFIGCIAGLVIIIAMI. The Cytoplasmic portion of the chain corresponds to 90–92; sequence RAP. The helical transmembrane segment at 93–113 threads the bilayer; the sequence is LLMILVCCIWAGFCTWISSLV. Residues 114–120 are Periplasmic-facing; the sequence is RIENSYA. Residues 121-141 form a helical membrane-spanning segment; sequence WGLAGYTALIIVITIQPEPLL. Residues 142 to 151 are Cytoplasmic-facing; that stretch reads TPQFAVERCS. Residues 152–172 traverse the membrane as a helical segment; sequence EIVIGIVCAIMADLLFSPRSI. The Periplasmic segment spans residues 173-369; that stretch reads KQEVDRELES…RTTLSCILGT (197 aa). Residues 370–390 form a helical membrane-spanning segment; the sequence is LFWLWTGWTSGSGAMVMIAVV. Over 391 to 406 the chain is Cytoplasmic; the sequence is TSLAMRLPNPRMVAID. The helical transmembrane segment at 407-427 threads the bilayer; that stretch reads FIYGTLAALPLGLLYFLVIIP. Over 428–430 the chain is Periplasmic; that stretch reads NTQ. The helical transmembrane segment at 431 to 451 threads the bilayer; it reads QSMLLLCISLAVLGFFLGIEV. At 452 to 458 the chain is on the cytoplasmic side; sequence QKRRLGS. A helical transmembrane segment spans residues 459–479; sequence MGALASTINIIVLDNPMTFHF. At 480–481 the chain is on the periplasmic side; sequence SQ. Residues 482-502 form a helical membrane-spanning segment; sequence FLDSALGQIVGCVLAFTVILL. Residues 503–655 are Cytoplasmic-facing; sequence VRDKSRDRTG…HKYQHALTDS (153 aa).

It belongs to the aromatic acid exporter ArAE (TC 2.A.85) family.

The protein localises to the cell inner membrane. Forms an efflux pump with AaeA. Could function as a metabolic relief valve, allowing to eliminate certain compounds when they accumulate to high levels in the cell. This Escherichia coli O157:H7 protein is p-hydroxybenzoic acid efflux pump subunit AaeB.